Here is a 247-residue protein sequence, read N- to C-terminus: Suppressor of silencing P0 (247 aa).

Residues 76-95 (LPRHLHYECLEWGLLCGTHP) enclose the F-box-like domain.

The protein belongs to the polerovirus P0 protein family.

Functionally, suppressor of RNA-mediated gene silencing, also known as post-transcriptional gene silencing (PTGS), a mechanism of plant viral defense that limits the accumulation of viral RNAs. The P0 protein suppresses local PTGS using its F-box-like domain to mediate destabilization and degradation of the AGO1 protein, although not via an interaction with host SKP1A. Participates, together with the proteins P1 and P7, in the inhibition of the induction of aphid-induced host phytohormones. This could play a role in the attraction to the infected plants by aphids. The polypeptide is Suppressor of silencing P0 (Potato leafroll virus (strain Potato/Scotland/strain 1/1984) (PLrV)).